A 285-amino-acid polypeptide reads, in one-letter code: Chlorite dismutase (285 aa).

The signal sequence occupies residues 1–38 (MKVRCVSLVAAGLLTIAGSAIGQPAPAPMPAMAPAAKP). Glu-105 serves as a coordination point for Ca(2+). His-205 contributes to the heme binding site. The active-site Proton acceptor is Arg-218. Positions 227 and 266 each coordinate Ca(2+).

The protein belongs to the chlorite dismutase family. In terms of assembly, homopentamer. Requires heme b as cofactor.

The protein localises to the periplasm. The catalysed reaction is chloride + O2 = chlorite. Catalyzes the heme-dependent decomposition of chlorite to O(2) and chloride with high efficiency and specificity. Used to detoxify chlorite, a by-product of the reduction of perchlorate, a primarily anthropogenic pollutant, in perchlorate-respiring bacteria. This Ideonella dechloratans protein is Chlorite dismutase (cld).